The following is a 134-amino-acid chain: D-ribose pyranase (134 aa).

His20 acts as the Proton donor in catalysis. Residues Asp28, His99, and 123–125 (YSN) each bind substrate.

This sequence belongs to the RbsD / FucU family. RbsD subfamily. Homodecamer.

Its subcellular location is the cytoplasm. The catalysed reaction is beta-D-ribopyranose = beta-D-ribofuranose. Its pathway is carbohydrate metabolism; D-ribose degradation; D-ribose 5-phosphate from beta-D-ribopyranose: step 1/2. In terms of biological role, catalyzes the interconversion of beta-pyran and beta-furan forms of D-ribose. The chain is D-ribose pyranase from Staphylococcus aureus (strain Mu3 / ATCC 700698).